Reading from the N-terminus, the 73-residue chain is MKRLLSYILLLPIYFYRACISPMTPPSCRFTPTCSQYAIEAIKKHGPFKGLYLAVRRILRCHPWGGSGYDPVP.

It belongs to the UPF0161 family.

Its subcellular location is the cell inner membrane. Functionally, could be involved in insertion of integral membrane proteins into the membrane. The sequence is that of Putative membrane protein insertion efficiency factor from Bacteroides fragilis (strain ATCC 25285 / DSM 2151 / CCUG 4856 / JCM 11019 / LMG 10263 / NCTC 9343 / Onslow / VPI 2553 / EN-2).